We begin with the raw amino-acid sequence, 73 residues long: Translational regulator CsrA (73 aa).

Belongs to the CsrA/RsmA family. As to quaternary structure, homodimer; the beta-strands of each monomer intercalate to form a hydrophobic core, while the alpha-helices form wings that extend away from the core.

It is found in the cytoplasm. A translational regulator that binds mRNA to regulate translation initiation and/or mRNA stability. Usually binds in the 5'-UTR at or near the Shine-Dalgarno sequence preventing ribosome-binding, thus repressing translation. Its main target seems to be the major flagellin gene, while its function is anatagonized by FliW. The polypeptide is Translational regulator CsrA (Thermosipho africanus (strain TCF52B)).